A 256-amino-acid chain; its full sequence is Mannose-specific lectin 1 (256 aa).

An N-terminal signal peptide occupies residues 1 to 23 (MAKLLLFLLPAILGLLVPRSAVA). Bulb-type lectin domains lie at 26-131 (TNYL…PWVR) and 145-252 (NNLL…SKRS). Beta-D-mannose contacts are provided by residues 51-55 (QDDCN), Y59, W63, Q64, 170-174 (QGDCN), Y178, and 182-185 (YGWQ). A Carbohydrate-binding motif 1 motif is present at residues 51-59 (QDDCNLVLY). Cystine bridges form between C54–C74 and C173–C195. Residues 170 to 178 (QGDCNLVLY) carry the Carbohydrate-binding motif 2 motif.

As to quaternary structure, forms heterodimers.

It is found in the secreted. Functionally, mannose-specific lectin. Shows agglutinating activity towards erythrocytes from rabbit. This chain is Mannose-specific lectin 1, found in Remusatia vivipara (Hitchhiker elephant ear).